The sequence spans 1412 residues: MENGVEHGVDESGENQVLSSSDGEGDCDGDGEVEGEVLQPPPPPPLQITNDCVGEGVQAEEGERAPATTGAVDVTPDPGPPPTDGAAPVAILEDNMCDKDVDSDAGDEDNDDETKENYEGFNGTGRTVTLQTLMAANVLQPGLGLMTIEYLGQKFVGDLLADGKIKSHETETIFLTPSAWAMHCKRIINPDKKSGCGWASVKYKGKKLDAYKNTYLRKCALQKETPLDDCELDAERKTDTPEIVVKRTVFAHNTVSNRNVVHDANMLIESVPFTSVGKLQPFLITVNSSALLLADFHCHLTVREVCGYLGGTWDMNTHTLSITKTYPCRSTRFDRQRAGEVERDIQKMMIQDQLLLVGWYHSHPKFQAEPTLRDCDAQLDYQIKMRGASDLTYTPCVSLIISPYYDENPTLESVVKCIWIVPPNENRQSMEYGRPMLMQYSVLPDKEIPEEVRSEIQLCVDYYSQYRSEMVKFRNIYNNDVTYNEKLKNTLYPKFPSKQSDKALWNWICAVLDCEQEDDFIPPKTIKIIDNDDLEVKEEDKPVVLMDLSGDVKINPPKEEQFSEAMGGLEDSGRKAEEESNAQAEQKASELKVMSLQEQLCMPSGLNMNPVRMLSPLATPNPTSLPPVLPNLGAPVLPATPSQLLPPQVPAVTAPPAITPAVTTSALTSALNASPRDSPITIQSNSASPAKFEVPVRASPSPAKSDTSSHASTSRTRNSPAPSPGKFSVSDIARNSPSITPNKYEAAAAALVPPAAACLPTANDLMAASLAQLAGQLPPNFLQGDLAALFQQQRKDYGSSSLNQLAAAAAKVGGSKQSNASASSGLNDPNVAAAVAAYSNSFNMPLPTGVGIGGSGNSNAHSSSKSKSERSSKSSSSSSSSNSSSTSNSYKTKLMKELDELKNDPLKMSELIRSPEYAALLLQQAEALGATTLGTLGFGSDYSYLTGAGLGVPAANALTGGQSSNSSSSKSSKSSPAAAAAAALSADYNNLIQASKLLGYDSYMQQSKQSNDLNAFLQQQMAVAAASIPPPPQTASSGSSNSSSSKKQQQLQQQQHQQQQQQQQQQAAAQADYTALLQTYTKLFDPNNQFAAAMSSNKHMAGAHNELSALLSSGVGVGGGASGGGSKQKQKDIQSDMLNQLLQLEKQDSEIKALLYRQNKAAADLDALFATPSGAVVGAGSSANAMKSGSSAGNSGVSGMSSPSSLSNQAAYYNALAQEKMQDYAAFFQQQHGKYGIPDPLSKTTLAANNMFMTPSALFKIQQESLSAMMMKPPKSTTPSSARTRESSASPALERLTPTKSASSGGSGGGGSNSNSGGKYNFSAVDLAISSVPSNTPSPAPSDGSSGSSHRRPSPDIGRLYGELAPPGALLGSGGVPKKRMEFASVADLAAPPPAKMPKNNMGDDILNLSHD.

Over residues 1-10 (MENGVEHGVD) the composition is skewed to basic and acidic residues. The tract at residues 1–123 (MENGVEHGVD…TKENYEGFNG (123 aa)) is disordered. Acidic residues-rich tracts occupy residues 23 to 35 (GEGD…EVEG) and 103 to 114 (SDAGDEDNDDET). Positions 113–219 (ETKENYEGFN…AYKNTYLRKC (107 aa)) constitute an RAMA domain. One can recognise an MPN domain in the interval 284–420 (ITVNSSALLL…LESVVKCIWI (137 aa)). Zn(2+) contacts are provided by His-361, His-363, and Asp-374. Disordered stretches follow at residues 554–589 (INPP…QKAS), 669–734 (SALN…DIAR), 853–891 (GGSG…NSYK), 1027–1066 (SIPP…QQQQ), 1271–1318 (MKPP…NSGG), 1330–1376 (SSVP…SGGV), and 1389–1412 (LAAP…LSHD). The stretch at 572 to 600 (SGRKAEEESNAQAEQKASELKVMSLQEQL) forms a coiled coil. Phosphoserine is present on residues Ser-699, Ser-701, Ser-705, Ser-719, Ser-723, and Ser-728. Over residues 702–720 (PAKSDTSSHASTSRTRNSP) the composition is skewed to polar residues. Low complexity-rich tracts occupy residues 873-891 (KSSS…NSYK) and 1036-1066 (SSGS…QQQQ). Over residues 1275–1290 (KSTTPSSARTRESSAS) the composition is skewed to polar residues. Ser-1288 and Ser-1290 each carry phosphoserine. Residue Thr-1297 is modified to Phosphothreonine. A compositionally biased stretch (low complexity) spans 1360–1370 (LYGELAPPGAL).

This sequence belongs to the peptidase M67 family.

Probable protease. The chain is MPN domain-containing protein CG4751 from Drosophila melanogaster (Fruit fly).